A 594-amino-acid polypeptide reads, in one-letter code: Pentatricopeptide repeat-containing protein At1g15480, mitochondrial (594 aa).

The N-terminal 67 residues, 1 to 67, are a transit peptide targeting the mitochondrion; that stretch reads MFALSKVLRR…WSSSTGRRSL (67 aa). The segment covering 62–75 has biased composition (low complexity); sequence TGRRSLSSDAGAKT. A disordered region spans residues 62–109; the sequence is TGRRSLSSDAGAKTTGDDDDLEDKNVDLATPDETSSDSEDGEEFSGDE. Residues 95-109 are compositionally biased toward acidic residues; sequence TSSDSEDGEEFSGDE. PPR repeat units follow at residues 226–260, 261–294, 295–329, 330–364, 432–466, 467–502, and 503–537; these read GELVYRTLLANHVATSNVRTAEAVFNKMKDLGFPL, STFTCNQMLILYKRVDKKKIADVLLLLEKENLKP, NLNTYKILIDTKGSSNDITGMEQIVETMKSEGVEL, DLRARALIARHYASAGLKEKAEKVLKEMEGESLEE, SSNVYSVLLRVYVDHKMVSEGKDLVKQMSDSGCNI, GALTWDAVIKLYVEAGEVEKAESSLSKAIQSKQIKP, and LMSSFMYLMHEYVRRGDVHNTEKIFQRMKQAGYQS.

This sequence belongs to the PPR family. P subfamily.

It is found in the mitochondrion. The polypeptide is Pentatricopeptide repeat-containing protein At1g15480, mitochondrial (Arabidopsis thaliana (Mouse-ear cress)).